The following is a 332-amino-acid chain: Ribose-phosphate pyrophosphokinase (332 aa).

ATP is bound at residue D55 to E57. Mg(2+) contacts are provided by H148 and D187. K211 is a catalytic residue. Residues R213, D237, and D241–T245 contribute to the D-ribose 5-phosphate site.

The protein belongs to the ribose-phosphate pyrophosphokinase family. Class I subfamily. As to quaternary structure, homohexamer. Requires Mg(2+) as cofactor.

The protein resides in the cytoplasm. The catalysed reaction is D-ribose 5-phosphate + ATP = 5-phospho-alpha-D-ribose 1-diphosphate + AMP + H(+). It participates in metabolic intermediate biosynthesis; 5-phospho-alpha-D-ribose 1-diphosphate biosynthesis; 5-phospho-alpha-D-ribose 1-diphosphate from D-ribose 5-phosphate (route I): step 1/1. Involved in the biosynthesis of the central metabolite phospho-alpha-D-ribosyl-1-pyrophosphate (PRPP) via the transfer of pyrophosphoryl group from ATP to 1-hydroxyl of ribose-5-phosphate (Rib-5-P). This chain is Ribose-phosphate pyrophosphokinase, found in Prochlorococcus marinus (strain MIT 9313).